The primary structure comprises 338 residues: N-acetylmuramate/N-acetylglucosamine kinase (338 aa).

This sequence belongs to the kinase AmgK family.

It catalyses the reaction N-acetyl-D-muramate + ATP = N-acetyl-alpha-D-muramate 1-phosphate + ADP + H(+). It carries out the reaction N-acetyl-D-glucosamine + ATP = N-acetyl-alpha-D-glucosamine 1-phosphate + ADP + H(+). The protein operates within cell wall biogenesis; peptidoglycan recycling. Functionally, sugar kinase that catalyzes the ATP-dependent phosphorylation of N-acetylmuramate (MurNAc) and N-acetylglucosamine (GlcNAc) at its C1 hydroxyl group, leading to MurNAc alpha-1P and GlcNAc alpha-1P, respectively. Is involved in peptidoglycan recycling as part of a cell wall recycling pathway that bypasses de novo biosynthesis of the peptidoglycan precursor UDP-MurNAc. Plays a role in intrinsic resistance to fosfomycin, which targets the de novo synthesis of UDP-MurNAc. The protein is N-acetylmuramate/N-acetylglucosamine kinase of Pseudomonas aeruginosa (strain ATCC 15692 / DSM 22644 / CIP 104116 / JCM 14847 / LMG 12228 / 1C / PRS 101 / PAO1).